The chain runs to 712 residues: Auxin response factor 15 (712 aa).

A DNA-binding region (TF-B3) is located at residues 142–244 (FCKTLTASDT…ELRLGVRRAA (103 aa)).

It belongs to the ARF family. In terms of assembly, homo and heterodimers. As to expression, expressed in roots, culms, leaves and young panicles.

The protein resides in the nucleus. Auxin response factors (ARFs) are transcriptional factors that bind specifically to the DNA sequence 5'-TGTCTC-3' found in the auxin-responsive promoter elements (AuxREs). This Oryza sativa subsp. japonica (Rice) protein is Auxin response factor 15 (ARF15).